Consider the following 394-residue polypeptide: Probable acetyl-CoA acyltransferase (394 aa).

Residue cysteine 88 is the Acyl-thioester intermediate of the active site. Active-site proton acceptor residues include histidine 349 and cysteine 378.

Belongs to the thiolase-like superfamily. Thiolase family.

It is found in the cytoplasm. The enzyme catalyses 2 acetyl-CoA = acetoacetyl-CoA + CoA. In Staphylococcus epidermidis (strain ATCC 35984 / DSM 28319 / BCRC 17069 / CCUG 31568 / BM 3577 / RP62A), this protein is Probable acetyl-CoA acyltransferase.